Here is a 563-residue protein sequence, read N- to C-terminus: Delta-1-pyrroline-5-carboxylate dehydrogenase, mitochondrial (563 aa).

The transit peptide at 1 to 24 (MLLRSAALCRALLARRGRAAGLCR) directs the protein to the mitochondrion. Residue S44 is modified to Phosphoserine. N6-acetyllysine is present on K52. N6-acetyllysine; alternate occurs at positions 93, 99, 114, 130, and 175. N6-succinyllysine; alternate occurs at positions 93, 99, 114, 130, and 175. NAD(+) is bound by residues S208, K233, and 286 to 290 (GSVPT). E314 functions as the Proton acceptor in the catalytic mechanism. An N6-acetyllysine modification is found at K318. K347 bears the N6-succinyllysine mark. C348 acts as the Nucleophile in catalysis. N6-acetyllysine occurs at positions 365 and 376. K395 is subject to N6-succinyllysine. E447 is an NAD(+) binding site. Residue K509 is modified to N6-acetyllysine; alternate. K509 is modified (N6-succinyllysine; alternate). S513 serves as a coordination point for substrate. The residue at position 531 (K531) is an N6-acetyllysine.

This sequence belongs to the aldehyde dehydrogenase family. Homodimer.

It is found in the mitochondrion matrix. It catalyses the reaction L-glutamate 5-semialdehyde + NAD(+) + H2O = L-glutamate + NADH + 2 H(+). It functions in the pathway amino-acid degradation; L-proline degradation into L-glutamate; L-glutamate from L-proline: step 2/2. Functionally, irreversible conversion of delta-1-pyrroline-5-carboxylate (P5C), derived either from proline or ornithine, to glutamate. This is a necessary step in the pathway interconnecting the urea and tricarboxylic acid cycles. The preferred substrate is glutamic gamma-semialdehyde, other substrates include succinic, glutaric and adipic semialdehydes. The protein is Delta-1-pyrroline-5-carboxylate dehydrogenase, mitochondrial (ALDH4A1) of Bos taurus (Bovine).